Here is a 359-residue protein sequence, read N- to C-terminus: E2F transcription factor-like E2FD (359 aa).

2 DNA-binding regions span residues 13–78 (RKDK…SWKG) and 138–217 (RKER…RWLG). Disordered regions lie at residues 255-274 (RNKS…QNTS) and 288-313 (DVKN…NNIR). The segment covering 293-309 (ASGSSTPAGTSESNDMG) has biased composition (polar residues).

The protein belongs to the E2F/DP family. In terms of assembly, monomer. No interactions with DPA or E2FA. As to expression, preferentially expressed in proliferating tissues. Highly expressed in young stalk and young flowers. Lower expression in young leaves and mature flowers. Detected in cotyledonary vascular tissues, the shoot apical meristem, the base of trichomes, the fully developed stomata, the central root cylinder and in the columella of lateral roots but not in the primary root tips or in the leaf epidermal cells.

Its subcellular location is the nucleus. Functionally, inhibitor of E2F-dependent regulation of gene expression. Binds specifically the E2 recognition site as a monomer without interacting with DP proteins. May be up-regulating E2FA and down-regulating repressors of cell cycle progression. Promotes cell proliferation and represses cell elongation. Regulated by proteolysis via a ubiquitin-proteasome pathway. The protein is E2F transcription factor-like E2FD (E2FD) of Arabidopsis thaliana (Mouse-ear cress).